A 339-amino-acid polypeptide reads, in one-letter code: Uroporphyrinogen decarboxylase (339 aa).

Residues R21–R25, D71, Y147, S202, and H315 contribute to the substrate site.

It belongs to the uroporphyrinogen decarboxylase family. In terms of assembly, homodimer.

The protein localises to the cytoplasm. It carries out the reaction uroporphyrinogen III + 4 H(+) = coproporphyrinogen III + 4 CO2. Its pathway is porphyrin-containing compound metabolism; protoporphyrin-IX biosynthesis; coproporphyrinogen-III from 5-aminolevulinate: step 4/4. Catalyzes the decarboxylation of four acetate groups of uroporphyrinogen-III to yield coproporphyrinogen-III. This Helicobacter pylori (strain G27) protein is Uroporphyrinogen decarboxylase.